A 138-amino-acid chain; its full sequence is Holo-[acyl-carrier-protein] synthase (138 aa).

Positions 8 and 57 each coordinate Mg(2+).

Belongs to the P-Pant transferase superfamily. AcpS family. Requires Mg(2+) as cofactor.

It is found in the cytoplasm. The catalysed reaction is apo-[ACP] + CoA = holo-[ACP] + adenosine 3',5'-bisphosphate + H(+). Its function is as follows. Transfers the 4'-phosphopantetheine moiety from coenzyme A to a Ser of acyl-carrier-protein. This Phenylobacterium zucineum (strain HLK1) protein is Holo-[acyl-carrier-protein] synthase.